Consider the following 151-residue polypeptide: Large ribosomal subunit protein bL9 (151 aa).

The protein belongs to the bacterial ribosomal protein bL9 family.

Functionally, binds to the 23S rRNA. The protein is Large ribosomal subunit protein bL9 of Prochlorococcus marinus (strain MIT 9301).